Reading from the N-terminus, the 279-residue chain is Digeranylgeranylglyceryl phosphate synthase (279 aa).

9 helical membrane-spanning segments follow: residues 16–36, 40–60, 77–99, 104–121, 124–144, 146–166, 192–212, 220–240, and 259–279; these read LIAGLVGILGATVALGHLPPI, LLIFLVVFLECSWGNIINDYF, GALSKNIALVYGISLGGVAILIA, FEAFIFALGAYLLMYLYA, LKPQPFIGNLVVATLTGITPI, GAIAVGKIGLAGYLALCAFLV, IVWGIESSSKIGVIFSVATII, AGIGLGYFPIIIVDGIILWAA, and LKIAIYLAVFSFLLGSITKGV.

It belongs to the UbiA prenyltransferase family. DGGGP synthase subfamily. The cofactor is Mg(2+).

It is found in the cell membrane. It carries out the reaction sn-3-O-(geranylgeranyl)glycerol 1-phosphate + (2E,6E,10E)-geranylgeranyl diphosphate = 2,3-bis-O-(geranylgeranyl)-sn-glycerol 1-phosphate + diphosphate. It participates in membrane lipid metabolism; glycerophospholipid metabolism. Functionally, prenyltransferase that catalyzes the transfer of the geranylgeranyl moiety of geranylgeranyl diphosphate (GGPP) to the C2 hydroxyl of (S)-3-O-geranylgeranylglyceryl phosphate (GGGP). This reaction is the second ether-bond-formation step in the biosynthesis of archaeal membrane lipids. The polypeptide is Digeranylgeranylglyceryl phosphate synthase (Thermococcus sibiricus (strain DSM 12597 / MM 739)).